A 501-amino-acid polypeptide reads, in one-letter code: Ribose import ATP-binding protein RbsA (501 aa).

2 consecutive ABC transporter domains span residues 5 to 241 (LSLE…VGRK) and 252 to 498 (LRND…TGGV). 37 to 44 (GENGAGKS) is a binding site for ATP.

The protein belongs to the ABC transporter superfamily. Ribose importer (TC 3.A.1.2.1) family. As to quaternary structure, the complex is composed of an ATP-binding protein (RbsA), two transmembrane proteins (RbsC) and a solute-binding protein (RbsB).

It is found in the cell inner membrane. It catalyses the reaction D-ribose(out) + ATP + H2O = D-ribose(in) + ADP + phosphate + H(+). Functionally, part of the ABC transporter complex RbsABC involved in ribose import. Responsible for energy coupling to the transport system. The polypeptide is Ribose import ATP-binding protein RbsA (Hahella chejuensis (strain KCTC 2396)).